The sequence spans 143 residues: Nucleoside diphosphate kinase (143 aa).

ATP contacts are provided by Lys-11, Phe-59, Arg-87, Thr-93, Arg-104, and Asn-114. The active-site Pros-phosphohistidine intermediate is His-117.

Belongs to the NDK family. As to quaternary structure, homotetramer. Mg(2+) is required as a cofactor.

The protein resides in the cytoplasm. It catalyses the reaction a 2'-deoxyribonucleoside 5'-diphosphate + ATP = a 2'-deoxyribonucleoside 5'-triphosphate + ADP. The enzyme catalyses a ribonucleoside 5'-diphosphate + ATP = a ribonucleoside 5'-triphosphate + ADP. Functionally, major role in the synthesis of nucleoside triphosphates other than ATP. The ATP gamma phosphate is transferred to the NDP beta phosphate via a ping-pong mechanism, using a phosphorylated active-site intermediate. The sequence is that of Nucleoside diphosphate kinase from Shewanella pealeana (strain ATCC 700345 / ANG-SQ1).